A 585-amino-acid chain; its full sequence is ATP-dependent lipid A-core flippase (585 aa).

The next 5 membrane-spanning stretches (helical) occupy residues 16–36 (LWPYISFYKAGLSVAVVALII), 66–86 (FLSMMPYYLVGLMILRGASGF), 156–176 (IIGLMALMFWNSWQLSAILLV), 252–272 (AIANPVIQVIASFALVVVLVL), and 278–298 (LRAELTPGTFAVVFGAMFGLM). The 285-residue stretch at 29 to 313 (VAVVALIINA…LTNVTSQFQR (285 aa)) folds into the ABC transmembrane type-1 domain. An ABC transporter domain is found at 345-581 (IQVKNVTFTY…DGAYAQLHRI (237 aa)). 379-386 (GRSGSGKS) contacts ATP.

The protein belongs to the ABC transporter superfamily. Lipid exporter (TC 3.A.1.106) family. Homodimer.

Its subcellular location is the cell inner membrane. It catalyses the reaction ATP + H2O + lipid A-core oligosaccharideSide 1 = ADP + phosphate + lipid A-core oligosaccharideSide 2.. Functionally, involved in lipopolysaccharide (LPS) biosynthesis. Translocates lipid A-core from the inner to the outer leaflet of the inner membrane. Transmembrane domains (TMD) form a pore in the inner membrane and the ATP-binding domain (NBD) is responsible for energy generation. This chain is ATP-dependent lipid A-core flippase, found in Photobacterium profundum (strain SS9).